Reading from the N-terminus, the 185-residue chain is Ribosome-recycling factor (185 aa).

Belongs to the RRF family.

Its subcellular location is the cytoplasm. In terms of biological role, responsible for the release of ribosomes from messenger RNA at the termination of protein biosynthesis. May increase the efficiency of translation by recycling ribosomes from one round of translation to another. This Thermosipho africanus (strain TCF52B) protein is Ribosome-recycling factor.